Here is a 57-residue protein sequence, read N- to C-terminus: UPF0391 membrane protein BRADO2787 (57 aa).

The next 2 membrane-spanning stretches (helical) occupy residues 6 to 26 and 35 to 55; these read WALL…TGVS and ILFY…LTIF.

This sequence belongs to the UPF0391 family.

The protein resides in the cell membrane. In Bradyrhizobium sp. (strain ORS 278), this protein is UPF0391 membrane protein BRADO2787.